Consider the following 290-residue polypeptide: Chitinase 10 (290 aa).

The signal sequence occupies residues 1–28; that stretch reads MAKPTPAPRATPFLLAAVLSIVVVAASG. 2 disulfides stabilise this stretch: cysteine 70-cysteine 132 and cysteine 144-cysteine 153. Residue glutamate 114 is the Proton donor of the active site. N-linked (GlcNAc...) asparagine glycosylation is found at asparagine 193 and asparagine 234. Cysteine 252 and cysteine 284 form a disulfide bridge.

It belongs to the glycosyl hydrolase 19 family. Chitinase class I subfamily. As to expression, expressed at low levels in roots, leaves and meristems.

The enzyme catalyses Random endo-hydrolysis of N-acetyl-beta-D-glucosaminide (1-&gt;4)-beta-linkages in chitin and chitodextrins.. This chain is Chitinase 10 (Cht10), found in Oryza sativa subsp. japonica (Rice).